Here is a 158-residue protein sequence, read N- to C-terminus: Siroheme decarboxylase beta subunit (158 aa).

The protein belongs to the Ahb/Nir family. As to quaternary structure, forms a heterodimer composed of AhbA and AhbB.

It carries out the reaction siroheme + 2 H(+) = 12,18-didecarboxysiroheme + 2 CO2. The protein operates within porphyrin-containing compound metabolism; protoheme biosynthesis. Functionally, involved in siroheme-dependent heme b biosynthesis. Catalyzes the decarboxylation of siroheme into didecarboxysiroheme. This is Siroheme decarboxylase beta subunit from Oleidesulfovibrio alaskensis (strain ATCC BAA-1058 / DSM 17464 / G20) (Desulfovibrio alaskensis).